Reading from the N-terminus, the 248-residue chain is Probable transcriptional regulatory protein Mchl_0946 (248 aa).

This sequence belongs to the TACO1 family.

The protein localises to the cytoplasm. In Methylorubrum extorquens (strain CM4 / NCIMB 13688) (Methylobacterium extorquens), this protein is Probable transcriptional regulatory protein Mchl_0946.